Here is a 409-residue protein sequence, read N- to C-terminus: tRNA (guanine-N(7)-)-methyltransferase non-catalytic subunit wuho (409 aa).

The segment at 48-72 (DADSDSDEESTQQPQKPPTNGNGTA) is disordered. The segment covering 58–72 (TQQPQKPPTNGNGTA) has biased composition (polar residues). WD repeat units lie at residues 72-111 (ADNV…DETN), 122-161 (MVSR…CKKP), 167-206 (GHMS…SIET), and 210-252 (GHGE…EVAR).

It belongs to the WD repeat TRM82 family. As to quaternary structure, forms a heterodimer with the catalytic subunit.

It is found in the nucleus. Its pathway is tRNA modification; N(7)-methylguanine-tRNA biosynthesis. Its function is as follows. Required for the formation of N(7)-methylguanine at position 46 (m7G46) in tRNA. In the complex, it is required to stabilize and induce conformational changes of the catalytic subunit. The protein is tRNA (guanine-N(7)-)-methyltransferase non-catalytic subunit wuho of Aedes aegypti (Yellowfever mosquito).